Reading from the N-terminus, the 722-residue chain is Pre-B-cell leukemia transcription factor-interacting protein 1 (722 aa).

Residues Met1 to Ser10 show a composition bias toward polar residues. Residues Met1–Ala180 form a disordered region. A compositionally biased stretch (basic and acidic residues) spans Asp88–Gly97. Residues Ser133, Ser144, Ser145, and Ser146 each carry the phosphoserine modification. Residue Thr150 is modified to Phosphothreonine. Phosphoserine is present on Ser166. Coiled coils occupy residues Leu266–Asp346 and Asp373–Leu401. A compositionally biased stretch (polar residues) spans Gln442 to Ser453. Disordered stretches follow at residues Gln442 to Ser562 and Arg691 to Gly722. Basic and acidic residues-rich tracts occupy residues His465–Val536 and Ser546–Ser559. Residues Gln482–Trp502 carry the Nuclear localization signal motif. Residue Ser559 is modified to Phosphoserine. Positions Asp686–Glu711 match the Nuclear localization signal motif.

As to quaternary structure, interacts with ESR1, PBX1, PBX2 and PBX3. Interacts with TEX11.

It is found in the cytoplasm. The protein localises to the cytoskeleton. The protein resides in the nucleus. Functionally, regulator of pre-B-cell leukemia transcription factors (BPXs) function. Inhibits the binding of PBX1-HOX complex to DNA and blocks the transcriptional activity of E2A-PBX1. Tethers estrogen receptor-alpha (ESR1) to microtubules and allows them to influence estrogen receptors-alpha signaling. This chain is Pre-B-cell leukemia transcription factor-interacting protein 1 (Pbxip1), found in Rattus norvegicus (Rat).